The chain runs to 165 residues: Xanthine-guanine phosphoribosyltransferase (165 aa).

5-phospho-alpha-D-ribose 1-diphosphate-binding positions include 41–42 and 98–106; these read RG and DDLTDTGKT. Asp99 serves as a coordination point for Mg(2+). Guanine-binding residues include Asp102 and Ile145. Xanthine contacts are provided by Asp102 and Ile145. GMP-binding positions include 102–106 and 144–145; these read DTGKT and WI.

It belongs to the purine/pyrimidine phosphoribosyltransferase family. XGPT subfamily. As to quaternary structure, homotetramer. Mg(2+) serves as cofactor.

It localises to the cell inner membrane. The catalysed reaction is GMP + diphosphate = guanine + 5-phospho-alpha-D-ribose 1-diphosphate. The enzyme catalyses XMP + diphosphate = xanthine + 5-phospho-alpha-D-ribose 1-diphosphate. It catalyses the reaction IMP + diphosphate = hypoxanthine + 5-phospho-alpha-D-ribose 1-diphosphate. Its pathway is purine metabolism; GMP biosynthesis via salvage pathway; GMP from guanine: step 1/1. It functions in the pathway purine metabolism; XMP biosynthesis via salvage pathway; XMP from xanthine: step 1/1. In terms of biological role, purine salvage pathway enzyme that catalyzes the transfer of the ribosyl-5-phosphate group from 5-phospho-alpha-D-ribose 1-diphosphate (PRPP) to the N9 position of the 6-oxopurines guanine and xanthine to form the corresponding ribonucleotides GMP (guanosine 5'-monophosphate) and XMP (xanthosine 5'-monophosphate), with the release of PPi. To a lesser extent, also acts on hypoxanthine. The chain is Xanthine-guanine phosphoribosyltransferase from Sinorhizobium medicae (strain WSM419) (Ensifer medicae).